Reading from the N-terminus, the 110-residue chain is Phosphoribosyl-ATP pyrophosphatase (110 aa).

The protein belongs to the PRA-PH family.

The protein resides in the cytoplasm. The catalysed reaction is 1-(5-phospho-beta-D-ribosyl)-ATP + H2O = 1-(5-phospho-beta-D-ribosyl)-5'-AMP + diphosphate + H(+). It participates in amino-acid biosynthesis; L-histidine biosynthesis; L-histidine from 5-phospho-alpha-D-ribose 1-diphosphate: step 2/9. In Clostridium acetobutylicum (strain ATCC 824 / DSM 792 / JCM 1419 / IAM 19013 / LMG 5710 / NBRC 13948 / NRRL B-527 / VKM B-1787 / 2291 / W), this protein is Phosphoribosyl-ATP pyrophosphatase (hisE).